The sequence spans 71 residues: General transcription and DNA repair factor IIH subunit TFB5 (71 aa).

The protein belongs to the TFB5 family. In terms of assembly, component of the 7-subunit TFIIH core complex.

The protein localises to the nucleus. The protein resides in the chromosome. In terms of biological role, component of the general transcription and DNA repair factor IIH (TFIIH) core complex, which is involved in general and transcription-coupled nucleotide excision repair (NER) of damaged DNA and in RNA transcription by RNA polymerase II. In NER, TFIIH acts by opening DNA around the lesion to allow the excision of the damaged oligonucleotide and its replacement by a new DNA fragment. In transcription, TFIIH has an essential role in transcription initiation. When the pre-initiation complex (PIC) has been established, TFIIH is required for promoter opening and promoter escape. Necessary for the stability of the TFIIH complex and for the presence of normal levels of TFIIH in the cell. Required for efficient binding of TFIIH to damaged DNA. Dispensable for normal development, but required when transcription is challenged. The polypeptide is General transcription and DNA repair factor IIH subunit TFB5 (Caenorhabditis elegans).